We begin with the raw amino-acid sequence, 1033 residues long: Tyrosine-protein kinase-like otk (1033 aa).

Residues 1–22 form the signal peptide; it reads MTARMISICGLVMALMMASVLA. Topologically, residues 23 to 581 are extracellular; that stretch reads SSSRFQRVPQ…GGDGFLVTRA (559 aa). Ig-like C2-type domains are found at residues 25 to 114, 113 to 199, 251 to 365, 368 to 463, and 468 to 558; these read SRFQ…AKLS, LSVI…RVMS, PEDL…APIN, PGIL…VAIN, and PKFS…VQLV. N-linked (GlcNAc...) asparagine glycosylation is present at asparagine 39. 4 disulfide bridges follow: cysteine 46–cysteine 95, cysteine 137–cysteine 188, cysteine 276–cysteine 354, and cysteine 399–cysteine 447. N-linked (GlcNAc...) asparagine glycosylation is found at asparagine 336, asparagine 417, asparagine 429, asparagine 444, asparagine 457, asparagine 512, and asparagine 524. Cysteine 490 and cysteine 542 form a disulfide bridge. Residues 582 to 602 form a helical membrane-spanning segment; it reads VLITMTVALAYIVLVVGLMLW. Over 603-1033 the chain is Cytoplasmic; that stretch reads CRYRRQARKA…LSKAMQSAEK (431 aa). Disordered stretches follow at residues 617–679 and 718–760; these read LSTK…KKSA and SPSD…KTSM. Residues 655–673 are compositionally biased toward polar residues; that stretch reads KSSGDAQKSDDTACSQQSR. Serine 678 is subject to Phosphoserine. The region spanning 692-1028 is the Protein kinase; inactive domain; that stretch reads LSELIQIGRG…QLGAALSKAM (337 aa). Residues 720-731 are compositionally biased toward basic and acidic residues; the sequence is SDKDADTEKQHS.

This sequence belongs to the protein kinase superfamily. Tyr protein kinase family. Insulin receptor subfamily. In terms of assembly, interacts with plexA; component of a receptor complex that mediates the repulsive signaling in response to Semaphorin ligands. Dynamically expressed during embryogenesis in several areas of the developing nervous system, including neurons and fasciculating axons. Expression in stage 7 embryos is seen in the anterior midgut primordia, cephalic furrow and along the germinal band. At stage 11, expression is in 15 stripes over the trunk region, and in the anterior and posterior midgut primordia. Stage 12 shows expression in the developing nervous system, procephalic lobe and maxillar bud. Stage 13 shows expression in the ventral cord, maxillar segment and in three regions of the gut. At stage 16 expression is preferentially detected throughout the nervous system, including the neuromers in the ventral cord and the supraesophageal ganglion (at protein level). In larva, expression is seen in developing R cells and is localized predominantly to R1-R6 growth cones.

Its subcellular location is the cell membrane. Acts as a calcium-dependent, homophilic cell adhesion molecule that regulates neural recognition during the development of the nervous system. Component of the repulsive Plexin signaling response to regulate motor axon guidance at the embryonic stage. Also component of a receptor complex that is required in the adult visual system to innervate the lamina layer; specific targeting of R1-R6 axons. This is Tyrosine-protein kinase-like otk from Drosophila melanogaster (Fruit fly).